Reading from the N-terminus, the 530-residue chain is Autoinducer-2 kinase (530 aa).

It belongs to the FGGY kinase family.

It localises to the cytoplasm. The catalysed reaction is (S)-4,5-dihydroxypentane-2,3-dione + ATP = (2S)-2-hydroxy-3,4-dioxopentyl phosphate + ADP + H(+). Functionally, catalyzes the phosphorylation of autoinducer-2 (AI-2) to phospho-AI-2, which subsequently inactivates the transcriptional regulator LsrR and leads to the transcription of the lsr operon. Phosphorylates the ring-open form of (S)-4,5-dihydroxypentane-2,3-dione (DPD), which is the precursor to all AI-2 signaling molecules, at the C5 position. This chain is Autoinducer-2 kinase, found in Salmonella paratyphi A (strain ATCC 9150 / SARB42).